A 197-amino-acid chain; its full sequence is 7-methyl-GTP pyrophosphatase (197 aa).

Catalysis depends on Asp79, which acts as the Proton acceptor.

This sequence belongs to the Maf family. YceF subfamily.

It localises to the cytoplasm. It catalyses the reaction N(7)-methyl-GTP + H2O = N(7)-methyl-GMP + diphosphate + H(+). Functionally, nucleoside triphosphate pyrophosphatase that hydrolyzes 7-methyl-GTP (m(7)GTP). May have a dual role in cell division arrest and in preventing the incorporation of modified nucleotides into cellular nucleic acids. This chain is 7-methyl-GTP pyrophosphatase, found in Dictyostelium discoideum (Social amoeba).